The following is a 177-amino-acid chain: Adenine phosphoribosyltransferase (177 aa).

The protein belongs to the purine/pyrimidine phosphoribosyltransferase family. In terms of assembly, homodimer.

It localises to the cytoplasm. It carries out the reaction AMP + diphosphate = 5-phospho-alpha-D-ribose 1-diphosphate + adenine. Its pathway is purine metabolism; AMP biosynthesis via salvage pathway; AMP from adenine: step 1/1. In terms of biological role, catalyzes a salvage reaction resulting in the formation of AMP, that is energically less costly than de novo synthesis. This is Adenine phosphoribosyltransferase from Acidothermus cellulolyticus (strain ATCC 43068 / DSM 8971 / 11B).